The primary structure comprises 348 residues: Erythronate-4-phosphate dehydrogenase (348 aa).

Positions 46 and 67 each coordinate substrate. Position 147 (Asp-147) interacts with NAD(+). Arg-209 is a catalytic residue. Asp-233 contributes to the NAD(+) binding site. Glu-238 is a catalytic residue. Residue His-255 is the Proton donor of the active site. An NAD(+)-binding site is contributed by Gly-258. Tyr-259 is a binding site for substrate.

It belongs to the D-isomer specific 2-hydroxyacid dehydrogenase family. PdxB subfamily. In terms of assembly, homodimer.

It localises to the cytoplasm. The catalysed reaction is 4-phospho-D-erythronate + NAD(+) = (R)-3-hydroxy-2-oxo-4-phosphooxybutanoate + NADH + H(+). Its pathway is cofactor biosynthesis; pyridoxine 5'-phosphate biosynthesis; pyridoxine 5'-phosphate from D-erythrose 4-phosphate: step 2/5. Functionally, catalyzes the oxidation of erythronate-4-phosphate to 3-hydroxy-2-oxo-4-phosphonooxybutanoate. In Bacteroides fragilis (strain ATCC 25285 / DSM 2151 / CCUG 4856 / JCM 11019 / LMG 10263 / NCTC 9343 / Onslow / VPI 2553 / EN-2), this protein is Erythronate-4-phosphate dehydrogenase.